A 376-amino-acid polypeptide reads, in one-letter code: Alpha-centractin (376 aa).

Methionine 1 is modified (N-acetylmethionine).

The protein belongs to the actin family. ARP1 subfamily. Part of the ACTR1A/ACTB filament around which the dynactin complex is built. The filament contains 8 copies of ACTR1A and 1 ACTB. Interacts with dynein and adapters such as BICD2. Interacts with BCCIP (isoform 2/alpha).

The protein resides in the cytoplasm. It is found in the cytoskeleton. The protein localises to the microtubule organizing center. It localises to the centrosome. Its subcellular location is the cell cortex. Part of the ACTR1A/ACTB filament around which the dynactin complex is built. The dynactin multiprotein complex activates the molecular motor dynein for ultra-processive transport along microtubules. This is Alpha-centractin (ACTR1A) from Canis lupus familiaris (Dog).